Here is a 165-residue protein sequence, read N- to C-terminus: Lipoprotein signal peptidase (165 aa).

3 helical membrane passes run 9–29, 65–85, and 97–119; these read PFLW…LAVV, WQKY…LFFL, and TGYA…HGFV. Catalysis depends on residues Asp121 and Asp139. Residues 134–154 traverse the membrane as a helical segment; it reads VFNIADVAICIGAGLLAIDAF.

Belongs to the peptidase A8 family.

The protein resides in the cell inner membrane. It catalyses the reaction Release of signal peptides from bacterial membrane prolipoproteins. Hydrolyzes -Xaa-Yaa-Zaa-|-(S,diacylglyceryl)Cys-, in which Xaa is hydrophobic (preferably Leu), and Yaa (Ala or Ser) and Zaa (Gly or Ala) have small, neutral side chains.. It functions in the pathway protein modification; lipoprotein biosynthesis (signal peptide cleavage). Its function is as follows. This protein specifically catalyzes the removal of signal peptides from prolipoproteins. The sequence is that of Lipoprotein signal peptidase from Histophilus somni (strain 129Pt) (Haemophilus somnus).